We begin with the raw amino-acid sequence, 306 residues long: Elongation factor Ts (306 aa).

The tract at residues 80–83 (TDFV) is involved in Mg(2+) ion dislocation from EF-Tu.

This sequence belongs to the EF-Ts family.

The protein resides in the cytoplasm. In terms of biological role, associates with the EF-Tu.GDP complex and induces the exchange of GDP to GTP. It remains bound to the aminoacyl-tRNA.EF-Tu.GTP complex up to the GTP hydrolysis stage on the ribosome. The sequence is that of Elongation factor Ts from Methylorubrum extorquens (strain CM4 / NCIMB 13688) (Methylobacterium extorquens).